The following is a 406-amino-acid chain: 26S proteasome regulatory subunit 8 (406 aa).

At Ala2 the chain carries N-acetylalanine. Ser120 carries the post-translational modification Phosphoserine. Residues 186–406 (VLLYGPPGTG…KNMSIKKLWK (221 aa)) form a may mediate interaction with PRPF9 region. 190 to 197 (GPPGTGKT) provides a ligand contact to ATP. Lys222 is subject to N6-acetyllysine.

It belongs to the AAA ATPase family. Component of the 19S proteasome regulatory particle complex. The 26S proteasome consists of a 20S core particle (CP) and two 19S regulatory subunits (RP). The regulatory particle is made of a lid composed of 9 subunits, a base containing 6 ATPases including PSMC5 and few additional components. Component of a complex with USP49 and RUVBL1. Interacts with PRPF19. Interacts with TRIM5. Interacts with NDC80. Interacts with PAAF1. Interacts, in vitro, with the thyroid hormone receptor (in a thyroid hormone T3-dependent manner) and with retinoid X receptor (RXR). Interacts with ERCC6.

The protein localises to the cytoplasm. Its subcellular location is the nucleus. Component of the 26S proteasome, a multiprotein complex involved in the ATP-dependent degradation of ubiquitinated proteins. This complex plays a key role in the maintenance of protein homeostasis by removing misfolded or damaged proteins, which could impair cellular functions, and by removing proteins whose functions are no longer required. Therefore, the proteasome participates in numerous cellular processes, including cell cycle progression, apoptosis, or DNA damage repair. PSMC5 belongs to the heterohexameric ring of AAA (ATPases associated with diverse cellular activities) proteins that unfolds ubiquitinated target proteins that are concurrently translocated into a proteolytic chamber and degraded into peptides. This is 26S proteasome regulatory subunit 8 (PSMC5) from Bos taurus (Bovine).